The following is a 498-amino-acid chain: Protein flp (498 aa).

The next 4 helical transmembrane spans lie at 6–26, 389–409, 433–453, and 471–491; these read LYFLSISIIIIVAISIAIYIT, FNIVTVLMTTLILLAFIFSAY, LSLCICIALALILYALPYLIL, and LALITTLIALFSTLIVILLFL.

It localises to the cell membrane. Functionally, its precise function is unknown. Has no penicillin-binding activity and is not involved in methicillin resistance. The chain is Protein flp (flp) from Staphylococcus aureus (strain COL).